The chain runs to 146 residues: Putative pre-16S rRNA nuclease (146 aa).

This sequence belongs to the YqgF nuclease family.

The protein resides in the cytoplasm. Functionally, could be a nuclease involved in processing of the 5'-end of pre-16S rRNA. The polypeptide is Putative pre-16S rRNA nuclease (Burkholderia thailandensis (strain ATCC 700388 / DSM 13276 / CCUG 48851 / CIP 106301 / E264)).